The sequence spans 293 residues: Putative immediate early glycoprotein (293 aa).

The first 21 residues, 1-21 (MKKLTMESLSVYIFVMGVCFT), serve as a signal peptide directing secretion. Residues asparagine 23, asparagine 55, asparagine 83, asparagine 120, asparagine 150, asparagine 156, asparagine 168, asparagine 212, and asparagine 249 are each glycosylated (N-linked (GlcNAc...) asparagine; by host). Residues 262-282 (LFFLAGGAFTMLLLLCCLSMI) form a helical membrane-spanning segment.

The protein belongs to the herpesviridae immediate early glycoprotein family.

It localises to the membrane. This Human herpesvirus 6A (strain Uganda-1102) (HHV-6 variant A) protein is Putative immediate early glycoprotein (U18).